A 117-amino-acid chain; its full sequence is DNA-directed RNA polymerase II subunit RPB11 (117 aa).

Met-1 bears the N-acetylmethionine mark.

It belongs to the archaeal Rpo11/eukaryotic RPB11/RPC19 RNA polymerase subunit family. In terms of assembly, component of the RNA polymerase II (Pol II) core complex consisting of 12 subunits: a ten-subunit catalytic core composed of POLR2A/RPB1, POLR2B/RPB2, POLR2C/RPB3, POLR2I/RPB9, POLR2J/RPB11, POLR2E/RPABC1, POLR2F/RPABC2, POLR2H/RPABC3, POLR2K/RPABC4 and POLR2L/RPABC5 and a mobile stalk composed of two subunits POLR2D/RPB4 and POLR2G/RPB7, protruding from the core and functioning primarily in transcription initiation. Part of Pol II(G) complex, in which Pol II core associates with an additional subunit POLR2M; unlike conventional Pol II, Pol II(G) functions as a transcriptional repressor. Part of TBP-based Pol II pre-initiation complex (PIC), in which Pol II core assembles with general transcription factors and other specific initiation factors including GTF2E1, GTF2E2, GTF2F1, GTF2F2, TCEA1, ERCC2, ERCC3, GTF2H2, GTF2H3, GTF2H4, GTF2H5, GTF2A1, GTF2A2, GTF2B and TBP; this large multi-subunit PIC complex mediates DNA unwinding and targets Pol II core to the transcription start site where the first phosphodiester bond forms. Interacts with PTPN6; this interaction promotes the recruitment of RNA pol II to the PCK1 promoter.

It is found in the nucleus. In terms of biological role, DNA-dependent RNA polymerase catalyzes the transcription of DNA into RNA using the four ribonucleoside triphosphates as substrates. Component of RNA polymerase II which synthesizes mRNA precursors and many functional non-coding RNAs. Pol II is the central component of the basal RNA polymerase II transcription machinery. It is composed of mobile elements that move relative to each other. POLR2J/RPB11 is part of the core element with the central large cleft. This chain is DNA-directed RNA polymerase II subunit RPB11 (POLR2J), found in Bos taurus (Bovine).